A 437-amino-acid polypeptide reads, in one-letter code: Pterin deaminase (437 aa).

A divalent metal cation is bound by residues His80 and His82. Position 85 (Lys85) interacts with substrate. His231 contributes to the a divalent metal cation binding site. Glu234 acts as the Proton donor in catalysis. Residue Asp331 coordinates a divalent metal cation. Residue 331-332 (DN) coordinates substrate.

It belongs to the metallo-dependent hydrolases superfamily. Pterin deaminase family. A divalent metal cation is required as a cofactor.

The catalysed reaction is a 2-amino-4-hydroxypteridine + H2O + H(+) = a 2,4-dihydroxypteridine + NH4(+). It carries out the reaction L-sepiapterin + H2O + H(+) = (S)-xanthopterin-B2 + NH4(+). Catalyzes the deamination of many pterin metabolites, such as formylpterin, pterin-6-carboxylate, pterin-7-carboxylate, pterin, hydroxymethylpterin, biopterin, D-(+)-neopterin, isoxanthopterin, sepiapterin, folate, xanthopterin, and 7,8-dihydrohydroxymethylpterin. May be involved in a degradative pathway for catabolizing pterin rings. This is Pterin deaminase from Rhizobium rhizogenes (strain K84 / ATCC BAA-868) (Agrobacterium radiobacter).